Reading from the N-terminus, the 107-residue chain is MAEFVPAETIEVVKKNCPEFYEAVANLQKEVFSGKKLDEKMQRLVLLAVVATLGDEKAVKRQTKKLMEMGATIEEIQDVMKVVYIGAGMPRFIKAVEAILEVAGDQC.

This is an uncharacterized protein from Methanocaldococcus jannaschii (strain ATCC 43067 / DSM 2661 / JAL-1 / JCM 10045 / NBRC 100440) (Methanococcus jannaschii).